A 302-amino-acid polypeptide reads, in one-letter code: 4-hydroxy-tetrahydrodipicolinate synthase (302 aa).

A pyruvate-binding site is contributed by Thr55. Tyr144 acts as the Proton donor/acceptor in catalysis. The active-site Schiff-base intermediate with substrate is Lys172. Pyruvate is bound at residue Val214.

This sequence belongs to the DapA family. In terms of assembly, homotetramer; dimer of dimers.

The protein localises to the cytoplasm. The enzyme catalyses L-aspartate 4-semialdehyde + pyruvate = (2S,4S)-4-hydroxy-2,3,4,5-tetrahydrodipicolinate + H2O + H(+). It functions in the pathway amino-acid biosynthesis; L-lysine biosynthesis via DAP pathway; (S)-tetrahydrodipicolinate from L-aspartate: step 3/4. Functionally, catalyzes the condensation of (S)-aspartate-beta-semialdehyde [(S)-ASA] and pyruvate to 4-hydroxy-tetrahydrodipicolinate (HTPA). The protein is 4-hydroxy-tetrahydrodipicolinate synthase of Prochlorococcus marinus (strain MIT 9303).